A 419-amino-acid polypeptide reads, in one-letter code: Histidine--tRNA ligase (419 aa).

The protein belongs to the class-II aminoacyl-tRNA synthetase family. In terms of assembly, homodimer.

It is found in the cytoplasm. The enzyme catalyses tRNA(His) + L-histidine + ATP = L-histidyl-tRNA(His) + AMP + diphosphate + H(+). The chain is Histidine--tRNA ligase from Novosphingobium aromaticivorans (strain ATCC 700278 / DSM 12444 / CCUG 56034 / CIP 105152 / NBRC 16084 / F199).